Here is a 1041-residue protein sequence, read N- to C-terminus: Beta-galactosidase (1041 aa).

Positions 103 and 201 each coordinate substrate. Aspartate 201 is a Na(+) binding site. Mg(2+) contacts are provided by glutamate 415, histidine 417, and glutamate 460. Substrate contacts are provided by residues glutamate 460 and 536–539 (EYAH). Glutamate 460 functions as the Proton donor in the catalytic mechanism. Glutamate 536 (nucleophile) is an active-site residue. Asparagine 596 serves as a coordination point for Mg(2+). Na(+)-binding residues include phenylalanine 600 and asparagine 603. The substrate site is built by asparagine 603 and tryptophan 1016.

This sequence belongs to the glycosyl hydrolase 2 family. In terms of assembly, homotetramer. Requires Mg(2+) as cofactor. The cofactor is Na(+).

It carries out the reaction Hydrolysis of terminal non-reducing beta-D-galactose residues in beta-D-galactosides.. The sequence is that of Beta-galactosidase from Alteromonas mediterranea (strain DSM 17117 / CIP 110805 / LMG 28347 / Deep ecotype).